Here is a 386-residue protein sequence, read N- to C-terminus: Succinate--CoA ligase [ADP-forming] subunit beta (386 aa).

The ATP-grasp domain occupies 9–244; it reads KEILRSFGVP…LDEEDPAEVE (236 aa). ATP-binding positions include Lys46, 53–55, Glu99, Ala102, and Glu107; that span reads GRG. 2 residues coordinate Mg(2+): Asn199 and Asp213. Substrate contacts are provided by residues Asn264 and 321–323; that span reads GIM.

It belongs to the succinate/malate CoA ligase beta subunit family. As to quaternary structure, heterotetramer of two alpha and two beta subunits. Mg(2+) is required as a cofactor.

It carries out the reaction succinate + ATP + CoA = succinyl-CoA + ADP + phosphate. The catalysed reaction is GTP + succinate + CoA = succinyl-CoA + GDP + phosphate. The protein operates within carbohydrate metabolism; tricarboxylic acid cycle; succinate from succinyl-CoA (ligase route): step 1/1. In terms of biological role, succinyl-CoA synthetase functions in the citric acid cycle (TCA), coupling the hydrolysis of succinyl-CoA to the synthesis of either ATP or GTP and thus represents the only step of substrate-level phosphorylation in the TCA. The beta subunit provides nucleotide specificity of the enzyme and binds the substrate succinate, while the binding sites for coenzyme A and phosphate are found in the alpha subunit. This Acidovorax ebreus (strain TPSY) (Diaphorobacter sp. (strain TPSY)) protein is Succinate--CoA ligase [ADP-forming] subunit beta.